A 68-amino-acid polypeptide reads, in one-letter code: Protein SlyX homolog (68 aa).

Belongs to the SlyX family.

In Pseudomonas syringae pv. tomato (strain ATCC BAA-871 / DC3000), this protein is Protein SlyX homolog.